The chain runs to 238 residues: Synapse differentiation-inducing gene protein 1-like (238 aa).

Disordered regions lie at residues 1-24 (MESLSELQNPLLPRSPTHLHGPYP), 78-111 (KVKEPRPGSCETSFTEGREPPAGPTERSTEPGQA), and 126-155 (EEFQGQEGDPEEEESDATSTESESEDNFLT). Residues 1–162 (MESLSELQNP…FLTLPPRDHL (162 aa)) are Extracellular-facing. The span at 133–151 (GDPEEEESDATSTESESED) shows a compositional bias: acidic residues. Residues 163-183 (GLTIFSMLCCFWPLGIAAFYF) traverse the membrane as a helical segment. At 184 to 205 (SQGTSKAISKGDFRLANTTSRR) the chain is on the cytoplasmic side. Residues 206–226 (ALFLATLSIAVGAGLYVAVVV) traverse the membrane as a helical segment. The Extracellular segment spans residues 227-238 (ALAAYMSQNGHS).

This sequence belongs to the CD225/Dispanin family.

It is found in the membrane. The protein localises to the golgi apparatus. It localises to the cis-Golgi network. This is Synapse differentiation-inducing gene protein 1-like (SYNDIG1L) from Bos taurus (Bovine).